Consider the following 603-residue polypeptide: UvrABC system protein C (603 aa).

Residues 17 to 94 (TTSGCYKMLN…IKTHKPDYNV (78 aa)) form the GIY-YIG domain.

The protein belongs to the UvrC family. In terms of assembly, interacts with UvrB in an incision complex.

It is found in the cytoplasm. Its function is as follows. The UvrABC repair system catalyzes the recognition and processing of DNA lesions. UvrC both incises the 5' and 3' sides of the lesion. The N-terminal half is responsible for the 3' incision and the C-terminal half is responsible for the 5' incision. The protein is UvrABC system protein C of Borreliella burgdorferi (strain ATCC 35210 / DSM 4680 / CIP 102532 / B31) (Borrelia burgdorferi).